A 370-amino-acid polypeptide reads, in one-letter code: Probable phosphoserine aminotransferase (370 aa).

Residue arginine 45 coordinates L-glutamate. Pyridoxal 5'-phosphate-binding positions include 79 to 80 (GT), tryptophan 105, threonine 154, aspartate 175, and glutamine 198. Lysine 199 is subject to N6-(pyridoxal phosphate)lysine. 240–241 (NT) is a pyridoxal 5'-phosphate binding site.

This sequence belongs to the class-V pyridoxal-phosphate-dependent aminotransferase family. SerC subfamily. Homodimer. Requires pyridoxal 5'-phosphate as cofactor.

The catalysed reaction is O-phospho-L-serine + 2-oxoglutarate = 3-phosphooxypyruvate + L-glutamate. The enzyme catalyses 4-(phosphooxy)-L-threonine + 2-oxoglutarate = (R)-3-hydroxy-2-oxo-4-phosphooxybutanoate + L-glutamate. The protein operates within amino-acid biosynthesis; L-serine biosynthesis; L-serine from 3-phospho-D-glycerate: step 2/3. Its pathway is cofactor biosynthesis; pyridoxine 5'-phosphate biosynthesis; pyridoxine 5'-phosphate from D-erythrose 4-phosphate: step 3/5. In terms of biological role, catalyzes the reversible conversion of 3-phosphohydroxypyruvate to phosphoserine and of 3-hydroxy-2-oxo-4-phosphonooxybutanoate to phosphohydroxythreonine. The chain is Probable phosphoserine aminotransferase from Caenorhabditis elegans.